Consider the following 414-residue polypeptide: MSWDQVWIDINIATMDANIGEPYGAITQAAMAVKDGKIAWLGPRSELPEFDVLATPVYRGKGNWVTPGLIDAHTHLVFAGSRANEFELRLKGASYEEIARAGGGIISTVKACREADEAELFELGRQRLNALAKEGVTTVEIKSGYGLDIETELKLLRVARELGKHHHVDIKTTFLGAHAIPSEYKDAANSTERSDAYVDLVVNEMLPAVMAENLADAVDVFCEGIAFNLAQTKRVFTAAKQAGLDIKLHAEQLSNIGGSQLAAQMGALSVDHIEYLDEAGVKALSESGTCAVLLPGAFYFLRETKLPPIDLLRQYKVPMVVASDYNPGSSPICSSLLMLNMACTLFRLTPEEALAGMTVNAAKALGIGDNVGHLAVGMQADFCLWNISSAAELAYSYGVDRLIDVVKTGKLVHQ.

Fe(3+) is bound by residues His-73 and His-75. Residues His-73 and His-75 each contribute to the Zn(2+) site. 4-imidazolone-5-propanoate-binding residues include Arg-82, Tyr-145, and His-178. Tyr-145 is a binding site for N-formimidoyl-L-glutamate. His-249 contacts Fe(3+). His-249 is a binding site for Zn(2+). Gln-252 contacts 4-imidazolone-5-propanoate. Asp-324 serves as a coordination point for Fe(3+). Asp-324 is a binding site for Zn(2+). Asn-326 and Gly-328 together coordinate N-formimidoyl-L-glutamate. Ser-329 provides a ligand contact to 4-imidazolone-5-propanoate.

The protein belongs to the metallo-dependent hydrolases superfamily. HutI family. Requires Zn(2+) as cofactor. The cofactor is Fe(3+).

Its subcellular location is the cytoplasm. The enzyme catalyses 4-imidazolone-5-propanoate + H2O = N-formimidoyl-L-glutamate. The protein operates within amino-acid degradation; L-histidine degradation into L-glutamate; N-formimidoyl-L-glutamate from L-histidine: step 3/3. Its function is as follows. Catalyzes the hydrolytic cleavage of the carbon-nitrogen bond in imidazolone-5-propanoate to yield N-formimidoyl-L-glutamate. It is the third step in the universal histidine degradation pathway. The polypeptide is Imidazolonepropionase (Shewanella denitrificans (strain OS217 / ATCC BAA-1090 / DSM 15013)).